A 505-amino-acid chain; its full sequence is Glycerol kinase 1 (505 aa).

Position 13 (T13) interacts with ADP. Residues T13, T14, and S15 each contribute to the ATP site. Residue T13 coordinates sn-glycerol 3-phosphate. An ADP-binding site is contributed by R17. 3 residues coordinate sn-glycerol 3-phosphate: R83, E84, and Y135. Glycerol-binding residues include R83, E84, and Y135. H231 is subject to Phosphohistidine; by HPr. D245 serves as a coordination point for sn-glycerol 3-phosphate. Residues D245 and Q246 each contribute to the glycerol site. 2 residues coordinate ADP: T267 and G310. The ATP site is built by T267, G310, Q314, and G411. The ADP site is built by G411 and N415.

The protein belongs to the FGGY kinase family. In terms of assembly, homotetramer and homodimer (in equilibrium). The phosphoenolpyruvate-dependent sugar phosphotransferase system (PTS), including enzyme I, and histidine-containing protein (HPr) are required for the phosphorylation, which leads to the activation of the enzyme.

It carries out the reaction glycerol + ATP = sn-glycerol 3-phosphate + ADP + H(+). Its pathway is polyol metabolism; glycerol degradation via glycerol kinase pathway; sn-glycerol 3-phosphate from glycerol: step 1/1. Its activity is regulated as follows. Activated by phosphorylation and inhibited by fructose 1,6-bisphosphate (FBP). Key enzyme in the regulation of glycerol uptake and metabolism. Catalyzes the phosphorylation of glycerol to yield sn-glycerol 3-phosphate. The polypeptide is Glycerol kinase 1 (Lactiplantibacillus plantarum (strain ATCC BAA-793 / NCIMB 8826 / WCFS1) (Lactobacillus plantarum)).